We begin with the raw amino-acid sequence, 231 residues long: Ribosomal RNA small subunit methyltransferase G (231 aa).

S-adenosyl-L-methionine-binding positions include Gly-75, 125–126 (GE), and Arg-140. Positions 204 to 213 (AEAEEGDSPE) are enriched in acidic residues. The disordered stretch occupies residues 204–231 (AEAEEGDSPEAADASRGVILELTKKNKG).

Belongs to the methyltransferase superfamily. RNA methyltransferase RsmG family.

The protein localises to the cytoplasm. Functionally, specifically methylates the N7 position of a guanine in 16S rRNA. This is Ribosomal RNA small subunit methyltransferase G from Rhodopirellula baltica (strain DSM 10527 / NCIMB 13988 / SH1).